Consider the following 399-residue polypeptide: F-box protein At1g10110 (399 aa).

The 48-residue stretch at 9 to 56 (PNWSELVTDILSLVFKHLSFTDFARAKTVCSSWYFASKSSSPRKNHTP) folds into the F-box domain.

The sequence is that of F-box protein At1g10110 from Arabidopsis thaliana (Mouse-ear cress).